The primary structure comprises 347 residues: Phosphoribosylformylglycinamidine cyclo-ligase (347 aa).

This sequence belongs to the AIR synthase family.

Its subcellular location is the cytoplasm. It catalyses the reaction 2-formamido-N(1)-(5-O-phospho-beta-D-ribosyl)acetamidine + ATP = 5-amino-1-(5-phospho-beta-D-ribosyl)imidazole + ADP + phosphate + H(+). It functions in the pathway purine metabolism; IMP biosynthesis via de novo pathway; 5-amino-1-(5-phospho-D-ribosyl)imidazole from N(2)-formyl-N(1)-(5-phospho-D-ribosyl)glycinamide: step 2/2. The chain is Phosphoribosylformylglycinamidine cyclo-ligase from Bacillus cytotoxicus (strain DSM 22905 / CIP 110041 / 391-98 / NVH 391-98).